The following is a 247-amino-acid chain: NAD(P)H-quinone oxidoreductase subunit K, chloroplastic (247 aa).

Residues Cys61, Cys62, Cys126, and Cys157 each contribute to the [4Fe-4S] cluster site.

This sequence belongs to the complex I 20 kDa subunit family. In terms of assembly, NDH is composed of at least 16 different subunits, 5 of which are encoded in the nucleus. It depends on [4Fe-4S] cluster as a cofactor.

Its subcellular location is the plastid. The protein resides in the chloroplast thylakoid membrane. It catalyses the reaction a plastoquinone + NADH + (n+1) H(+)(in) = a plastoquinol + NAD(+) + n H(+)(out). It carries out the reaction a plastoquinone + NADPH + (n+1) H(+)(in) = a plastoquinol + NADP(+) + n H(+)(out). In terms of biological role, NDH shuttles electrons from NAD(P)H:plastoquinone, via FMN and iron-sulfur (Fe-S) centers, to quinones in the photosynthetic chain and possibly in a chloroplast respiratory chain. The immediate electron acceptor for the enzyme in this species is believed to be plastoquinone. Couples the redox reaction to proton translocation, and thus conserves the redox energy in a proton gradient. This is NAD(P)H-quinone oxidoreductase subunit K, chloroplastic from Anthoceros angustus (Hornwort).